An 841-amino-acid polypeptide reads, in one-letter code: Probable outer membrane usher protein EcpC (841 aa).

An N-terminal signal peptide occupies residues 1 to 29 (MPLRRFSPGLKAQFAFGMVFLFVQPDASA).

The protein belongs to the EcpC/MatD family.

Its function is as follows. Part of the ecpRABCDE operon, which encodes the E.coli common pilus (ECP). ECP is found in both commensal and pathogenic strains and plays a dual role in early-stage biofilm development and host cell recognition. This is Probable outer membrane usher protein EcpC (ecpC) from Escherichia coli O18:K1:H7 (strain IHE3034 / ExPEC).